The chain runs to 211 residues: Uracil phosphoribosyltransferase (211 aa).

5-phospho-alpha-D-ribose 1-diphosphate-binding positions include R78, R103, and 130 to 138 (DPMLATGGT). Uracil is bound by residues I195 and 200-202 (GDA). D201 contacts 5-phospho-alpha-D-ribose 1-diphosphate.

Belongs to the UPRTase family. Requires Mg(2+) as cofactor.

It carries out the reaction UMP + diphosphate = 5-phospho-alpha-D-ribose 1-diphosphate + uracil. It participates in pyrimidine metabolism; UMP biosynthesis via salvage pathway; UMP from uracil: step 1/1. With respect to regulation, allosterically activated by GTP. Its function is as follows. Catalyzes the conversion of uracil and 5-phospho-alpha-D-ribose 1-diphosphate (PRPP) to UMP and diphosphate. The polypeptide is Uracil phosphoribosyltransferase (Pseudarthrobacter chlorophenolicus (strain ATCC 700700 / DSM 12829 / CIP 107037 / JCM 12360 / KCTC 9906 / NCIMB 13794 / A6) (Arthrobacter chlorophenolicus)).